A 1438-amino-acid chain; its full sequence is DNA polymerase III PolC-type (1438 aa).

The Exonuclease domain occupies 422–578 (YVVFDVETTG…YDTESTAYIF (157 aa)).

The protein belongs to the DNA polymerase type-C family. PolC subfamily.

It localises to the cytoplasm. It carries out the reaction DNA(n) + a 2'-deoxyribonucleoside 5'-triphosphate = DNA(n+1) + diphosphate. In terms of biological role, required for replicative DNA synthesis. This DNA polymerase also exhibits 3' to 5' exonuclease activity. The sequence is that of DNA polymerase III PolC-type from Staphylococcus haemolyticus (strain JCSC1435).